A 93-amino-acid polypeptide reads, in one-letter code: Molybdopterin synthase sulfur carrier subunit (93 aa).

The residue at position 93 (glycine 93) is a 1-thioglycine; alternate. Glycine 93 bears the Glycyl adenylate; alternate mark.

It belongs to the MoaD family. MOCS2A subfamily. In terms of assembly, heterotetramer; composed of 2 small (MOCS2A) and 2 large (MOCS2B) subunits. In terms of processing, C-terminal thiocarboxylation occurs in 2 steps, it is first acyl-adenylated (-COAMP) via the hesA/moeB/thiF part of UBA4, then thiocarboxylated (-COSH) via the rhodanese domain of UBA4.

It is found in the cytoplasm. It functions in the pathway cofactor biosynthesis; molybdopterin biosynthesis. Functionally, acts as a sulfur carrier required for molybdopterin biosynthesis. Component of the molybdopterin synthase complex that catalyzes the conversion of precursor Z into molybdopterin by mediating the incorporation of 2 sulfur atoms into precursor Z to generate a dithiolene group. In the complex, serves as sulfur donor by being thiocarboxylated (-COSH) at its C-terminus by UBA4. After interaction with MOCS2B, the sulfur is then transferred to precursor Z to form molybdopterin. This Mycosarcoma maydis (Corn smut fungus) protein is Molybdopterin synthase sulfur carrier subunit.